Reading from the N-terminus, the 806-residue chain is MLTSKEKSDTKRLPMMPIRDVVIFPYMMTPFVVGRESSVRALEEAMAGDKKIFLATQHDASIDEPKPNEIYSVGTIVNIVQSLKLPDGNIKVLVEGVERAKVVSVADDEGFFRATVRTSGFKVETGPQLDALISRVTTLFEQYVKLSQNLNYETMVAAIRVDEPGKLADTVGANLQLTIEEKQELLEIFDPIDRLTRVAEMLDIEIEKLNVDRTIQGRVKRQMEKAQKEYYLNEKIKAIQKELGRGEKSEIDELKRRIEEAGMTADAQEKAMAELKRLENMPPMSAESTVSRNYLDWLLAVPWKKKSKEIRDLKFAEGVLEADHYGLEKIKERILEFLAVRRLVKNPKGSILCFVGPPGVGKTSLGMSIAKATGRKFVRMSLGGVRDEAEVRGHRRTYIGALPGQIIQMMKKAGTRNPVFMLDEVDKMSMDFRGDPSAALLEVLDPEQNFMFVDHYLDVEYDLSQVFFVATANVMHTIPAALQDRMEVIRLSGYTELEKMEIAKRFLVKKQIEATGLDSKQIDFQDDGINSLIQYYTREAGVRNLEREIGNVCRKVARQVVNAESGKDKKAPAKAVINGDKVPELLGPWKFRDLVVEKKNEIGAATGLAWTEVGGQLLTVECTLMEGKGKLTITGKLGEVMQESAQAAMSYIRSRAMSLGIPRDFYRNLDLHIHIPEGAIPKDGPSAGITLATTICSALTKIPVRGDLAMTGEITLRGKVLPIGGLKEKLMAAHRHGILEAIMPKENEKDLPDIPDAIKKTMKLHFVESMDEVLKIALEREIVALPIPGAELPVEAGKPAEETVAH.

A Lon N-terminal domain is found at 13 to 206 (LPMMPIRDVV…RVAEMLDIEI (194 aa)). Residue 356–363 (GPPGVGKT) coordinates ATP. The region spanning 599-780 (KNEIGAATGL…DEVLKIALER (182 aa)) is the Lon proteolytic domain. Active-site residues include Ser686 and Lys729.

This sequence belongs to the peptidase S16 family. In terms of assembly, homohexamer. Organized in a ring with a central cavity.

The protein localises to the cytoplasm. It catalyses the reaction Hydrolysis of proteins in presence of ATP.. ATP-dependent serine protease that mediates the selective degradation of mutant and abnormal proteins as well as certain short-lived regulatory proteins. Required for cellular homeostasis and for survival from DNA damage and developmental changes induced by stress. Degrades polypeptides processively to yield small peptide fragments that are 5 to 10 amino acids long. Binds to DNA in a double-stranded, site-specific manner. The sequence is that of Lon protease from Solibacter usitatus (strain Ellin6076).